Consider the following 396-residue polypeptide: 12-oxophytodienoate reductase 3 (396 aa).

FMN-binding positions include 31-33, G64, and Q106; that span reads PMT. 185-188 provides a ligand contact to substrate; it reads HGAH. The active-site Proton donor is Y190. FMN is bound at residue R237. R283 serves as a coordination point for substrate. FMN is bound by residues G321 and 342-343; that span reads GR. Positions 342-343 are FMN; that stretch reads GR. The Microbody targeting signal signature appears at 394-396; it reads SRL.

It belongs to the NADH:flavin oxidoreductase/NADH oxidase family. The cofactor is FMN. Expressed in roots and to a lower extent in leaves and flowers.

The protein resides in the peroxisome. The enzyme catalyses (1S,2S)-OPC-8 + NADP(+) = (9S,13S,15Z)-12-oxophyto-10,15-dienoate + NADPH + H(+). It functions in the pathway lipid metabolism; oxylipin biosynthesis. Its function is as follows. Specifically cleaves olefinic bonds in cyclic enones. Involved in the biosynthesis of jasmonic acid (JA) and perhaps in biosynthesis or metabolism of other oxylipin signaling moleclules. It is required for the spatial and temporal regulation of JA levels during dehiscence of anthers, promoting the stomium degeneration program. In vitro, reduces 9S,13S-12-oxophytodienoic acid (9S,13S-OPDA) and 9R,13R-OPDA to 9S,13S-OPC-8:0 and 9R,13R-OPC-8:0, respectively. This Solanum lycopersicum (Tomato) protein is 12-oxophytodienoate reductase 3 (OPR3).